We begin with the raw amino-acid sequence, 177 residues long: ATP-dependent protease subunit HslV (177 aa).

The active site involves threonine 6. Serine 161, cysteine 164, and threonine 167 together coordinate Na(+).

Belongs to the peptidase T1B family. HslV subfamily. As to quaternary structure, a double ring-shaped homohexamer of HslV is capped on each side by a ring-shaped HslU homohexamer. The assembly of the HslU/HslV complex is dependent on binding of ATP.

Its subcellular location is the cytoplasm. The catalysed reaction is ATP-dependent cleavage of peptide bonds with broad specificity.. Its activity is regulated as follows. Allosterically activated by HslU binding. Functionally, protease subunit of a proteasome-like degradation complex believed to be a general protein degrading machinery. In Thermodesulfovibrio yellowstonii (strain ATCC 51303 / DSM 11347 / YP87), this protein is ATP-dependent protease subunit HslV.